Consider the following 836-residue polypeptide: Exonuclease 1 (836 aa).

The segment at 1-99 is N-domain; the sequence is MGIQGLLPQL…TKRERSRKEN (99 aa). The Mg(2+) site is built by D30 and D78. Residues 82-108 form a disordered region; the sequence is LPMKGDQETKRERSRKENLERAKEHES. Positions 84–108 are enriched in basic and acidic residues; sequence MKGDQETKRERSRKENLERAKEHES. Positions 138 to 230 are I-domain; it reads KQEKVDYIVA…ILSGCDYLPS (93 aa). Residues E150, D152, D171, D173, and D226 each coordinate Mg(2+). 3 disordered regions span residues 464 to 488, 568 to 641, and 744 to 836; these read RDDS…DPDI, EDEC…TNSE, and TASA…TSRS. Over residues 568-577 the composition is skewed to acidic residues; the sequence is EDECHDEDNC. 2 stretches are compositionally biased toward polar residues: residues 578-592 and 744-758; these read ETGN…QRSS and TASA…TSKA.

It belongs to the XPG/RAD2 endonuclease family. EXO1 subfamily. Mg(2+) is required as a cofactor.

It is found in the nucleus. Functionally, putative 5'-&gt;3' double-stranded DNA exonuclease which may also contain a cryptic 3'-&gt;5' double-stranded DNA exonuclease activity. May be involved in DNA mismatch repair (MMR). The protein is Exonuclease 1 (EXO1) of Oryza sativa subsp. japonica (Rice).